The chain runs to 212 residues: Ribonuclease HII (212 aa).

One can recognise an RNase H type-2 domain in the interval 1 to 206 (MARFGVDEAG…SRDALGAAEQ (206 aa)). A divalent metal cation contacts are provided by aspartate 7, glutamate 8, and aspartate 100.

The protein belongs to the RNase HII family. Requires Mn(2+) as cofactor. It depends on Mg(2+) as a cofactor.

Its subcellular location is the cytoplasm. The catalysed reaction is Endonucleolytic cleavage to 5'-phosphomonoester.. Its function is as follows. Endonuclease that specifically degrades the RNA of RNA-DNA hybrids. This Halobacterium salinarum (strain ATCC 29341 / DSM 671 / R1) protein is Ribonuclease HII.